Consider the following 280-residue polypeptide: Virginiamycin B lyase (280 aa).

Substrate is bound at residue H215. Residue E254 coordinates Mg(2+). The active-site Proton acceptor is H256. E271 contacts Mg(2+).

Belongs to the Vgb family. Monomer. Mg(2+) is required as a cofactor.

Its function is as follows. Inactivates the type B streptogramin antibiotics by linearizing the lactone ring at the ester linkage, generating a free phenylglycine carboxylate and converting the threonyl moiety into 2-amino-butenoic acid. This is Virginiamycin B lyase from Mycobacterium sp. (strain KMS).